The primary structure comprises 630 residues: tRNA uridine 5-carboxymethylaminomethyl modification enzyme MnmG (630 aa).

13–18 (GGGHAG) is an FAD binding site. NAD(+) is bound at residue 273 to 287 (GPRYCPSIEDKIHRF).

The protein belongs to the MnmG family. Homodimer. Heterotetramer of two MnmE and two MnmG subunits. Requires FAD as cofactor.

The protein localises to the cytoplasm. Functionally, NAD-binding protein involved in the addition of a carboxymethylaminomethyl (cmnm) group at the wobble position (U34) of certain tRNAs, forming tRNA-cmnm(5)s(2)U34. The chain is tRNA uridine 5-carboxymethylaminomethyl modification enzyme MnmG from Pseudomonas putida (strain ATCC 700007 / DSM 6899 / JCM 31910 / BCRC 17059 / LMG 24140 / F1).